A 401-amino-acid chain; its full sequence is Probable thioesterase FGSG_00047 (401 aa).

Residues 379–401 form a disordered region; sequence AREMDQRKRQKDFTHTTIHDKNS.

The protein belongs to the AMT4 thioesterase family.

It participates in mycotoxin biosynthesis. Functionally, probable thioesterase; part of the gene cluster that mediates the biosynthesis of gramillins A and B, bicyclic lipopeptides that induce cell death in maize leaves but not in wheat leaves. The nonribosomal peptide synthetase GRA1 incorporates respectively a glutamic adic (Glu), a leucine (Leu), a serine (Ser), a hydroxyglutamine (HOGln), a 2-amino decanoic acid, and 2 cysteins (CysB and CysA). The biosynthesis of 2-amino decanoic acid incorporated in gramillins could be initiated by a fatty acid synthase composed of the alpha and beta subunits FGSG_00036 and FGSG_11656. The cytochrome P450 monooxygenase FGSG_15680 could hydroxylate the fatty acid chain. Subsequent oxidation to the ketone by the oxidoreductase FGSG_00048 and transamination by aminotransferase FGSG_00049 could form 2-amino-decanoic acid. On the other hand, FGSG_15680 could also be responsible for the HO-modified glutamine at the gamma-position. Whether hydroxylation occurs on the fully assembled product or on the Gln residue prior to assembly into the gramillins requires further proof. The thioredoxin FGSG_00043 could also be required for the disulfide-bond formation between CysA and CysB. The specific involvement of the remaining proteins from the cluster is more difficult to discern, but could have broader regulatory (FGSG_00040 and FGSG_11657) or enzymatic functions (FGSG_00044 and FGSG_00045). The final C-domain of GRA1 does not possess the expected sequence of a termination CT domain, often implicated in macrocyclization and release of a cyclopeptidein fungal NRPs; and the thioesterase FGSG_00047 may act in concert with the terminal C-domain of GRA1 to catalyze the formation of the macrocyclic anhydride and release of the products. This chain is Probable thioesterase FGSG_00047, found in Gibberella zeae (strain ATCC MYA-4620 / CBS 123657 / FGSC 9075 / NRRL 31084 / PH-1) (Wheat head blight fungus).